The following is an 89-amino-acid chain: MAKKCVVVRNEKRKQIVEKYASKREELKKQGDYEALRKLPRDSSPTRLKNRCSITGRAKGVYKKFGLCRHILRKYALEGKIPGMKKASW.

The protein belongs to the universal ribosomal protein uS14 family. As to quaternary structure, part of the 30S ribosomal subunit. Contacts proteins S3 and S10.

Functionally, binds 16S rRNA, required for the assembly of 30S particles and may also be responsible for determining the conformation of the 16S rRNA at the A site. This Chloroherpeton thalassium (strain ATCC 35110 / GB-78) protein is Small ribosomal subunit protein uS14.